Consider the following 242-residue polypeptide: Phosphoribosylaminoimidazole-succinocarboxamide synthase (242 aa).

Belongs to the SAICAR synthetase family.

It carries out the reaction 5-amino-1-(5-phospho-D-ribosyl)imidazole-4-carboxylate + L-aspartate + ATP = (2S)-2-[5-amino-1-(5-phospho-beta-D-ribosyl)imidazole-4-carboxamido]succinate + ADP + phosphate + 2 H(+). It participates in purine metabolism; IMP biosynthesis via de novo pathway; 5-amino-1-(5-phospho-D-ribosyl)imidazole-4-carboxamide from 5-amino-1-(5-phospho-D-ribosyl)imidazole-4-carboxylate: step 1/2. This is Phosphoribosylaminoimidazole-succinocarboxamide synthase from Trichodesmium erythraeum (strain IMS101).